The chain runs to 345 residues: High mobility group protein 20A (345 aa).

Disordered regions lie at residues 1-124 (MENT…TERP) and 167-198 (QYQN…VRGV). 2 stretches are compositionally biased toward polar residues: residues 32 to 48 (LSGS…PTLQ) and 57 to 67 (LQQSGEQQLGN). Residues 80-94 (TRRGGWTKGRKRKRS) show a composition bias toward basic residues. Residues 101–169 (PKAPLTGYVR…RYTKELQQYQ (69 aa)) constitute a DNA-binding region (HMG box). Residues 112 to 124 (MNERREQLRTERP) show a composition bias toward basic and acidic residues. Positions 167 to 180 (QYQNTDAYQTYSRK) are enriched in polar residues. The stretch at 227-290 (SKAREAELRQ…QHLQSVRQAL (64 aa)) forms a coiled coil.

The protein resides in the nucleus. Plays a role in neuronal differentiation. This is High mobility group protein 20A (hmg20a) from Xenopus tropicalis (Western clawed frog).